Reading from the N-terminus, the 1042-residue chain is Sarcoplasmic/endoplasmic reticulum calcium ATPase 2 (1042 aa).

The Cytoplasmic portion of the chain corresponds to 1–48 (MENAHTKTVEEVLGHFGVNESTGLSLEQVKKLKERWGSNELPAEEGKT). S38 is subject to Phosphoserine. A helical membrane pass occupies residues 49 to 69 (LLELVIEQFEDLLVRILLLAA). Over 70–89 (CISFVLAWFEEGEETITAFV) the chain is Lumenal. The chain crosses the membrane as a helical span at residues 90–110 (EPFVILLILVANAIVGVWQER). The Cytoplasmic segment spans residues 111–253 (NAENAIEALK…QERTPLQQKL (143 aa)). A helical membrane pass occupies residues 254 to 273 (DEFGEQLSKVISLICIAVWI). The Lumenal segment spans residues 274 to 295 (INIGHFNDPVHGGSWIRGAIYY). A 3'-nitrotyrosine mark is found at Y294 and Y295. The chain crosses the membrane as a helical span at residues 296-313 (FKIAVALAVAAIPEGLPA). The Ca(2+) site is built by V304, A305, I307, and E309. The Cytoplasmic segment spans residues 314-756 (VITTCLALGT…EEGRAIYNNM (443 aa)). D351 serves as the catalytic 4-aspartylphosphate intermediate. Mg(2+) is bound by residues D351 and T353. Residue T353 coordinates ATP. Position 441 is a phosphothreonine (T441). The ATP site is built by E442, R489, and K514. S531 carries the post-translational modification Phosphoserine. R559 provides a ligand contact to ATP. The interaction with HAX1 stretch occupies residues 575-594 (MNLEDSANFIKYETNLTFVG). S580 carries the post-translational modification Phosphoserine. ATP contacts are provided by T624, G625, and D626. S663 carries the phosphoserine modification. ATP is bound by residues R677 and K683. Residue D702 participates in Mg(2+) binding. N705 contacts ATP. The helical transmembrane segment at 757-776 (KQFIRYLISSNVGEVVCIFL) threads the bilayer. 2 residues coordinate Ca(2+): N767 and E770. Residues 777-786 (TAALGFPEAL) lie on the Lumenal side of the membrane. The chain crosses the membrane as a helical span at residues 787–807 (IPVQLLWVNLVTDGLPATALG). Residues 787–807 (IPVQLLWVNLVTDGLPATALG) form an interaction with PLN region. Residues 788–1042 (PVQLLWVNLV…DTNFSDMFWS (255 aa)) are interaction with TMEM64 and PDIA3. N795, T798, and D799 together coordinate Ca(2+). Over 808–827 (FNPPDLDIMNKPPRNPKEPL) the chain is Cytoplasmic. Residues 828–850 (ISGWLFFRYLAIGCYVGAATVGA) form a helical membrane-spanning segment. The Lumenal portion of the chain corresponds to 851 to 896 (AAWWFIAADGGPRVTFYQLSHFLQCKEDNPDFEGVDCAVFESPYPM). C875 and C887 form a disulfide bridge. A helical membrane pass occupies residues 897 to 916 (TMALSVLVTIEMCNALNSLS). E907 is a Ca(2+) binding site. Topologically, residues 917–929 (ENQSLLRMPPWEN) are cytoplasmic. Residues 930–948 (IWLVGSICLSMSLHFLILY) form a helical membrane-spanning segment. Residues 931–942 (WLVGSICLSMSL) are interaction with PLN. Topologically, residues 949-963 (VEPLPLIFQITPLNL) are lumenal. The chain crosses the membrane as a helical span at residues 964-984 (TQWLMVLKISLPVILMDETLK). Topologically, residues 985-1042 (FVARNYLEPGKECVQPATKSCSFSACTDGISWPFVLLIMPLVIWVYSTDTNFSDMFWS) are cytoplasmic.

The protein belongs to the cation transport ATPase (P-type) (TC 3.A.3) family. Type IIA subfamily. In terms of assembly, interacts with sarcolipin (SLN); the interaction inhibits ATP2A2 Ca(2+) affinity. Interacts with phospholamban (PLN); the interaction inhibits ATP2A2 Ca(2+) affinity. Interacts with myoregulin (MRLN). Interacts with ARLN and ERLN; the interactions inhibit ATP2A2 Ca(2+) affinity. Interacts with STRIT1/DWORF; the interaction results in activation of ATP2A2. Interacts with the monomeric forms of SLN, PLN, ARLN, ERLN and STRI1/DWORF. Interacts with HAX1. Interacts with S100A8 and S100A9. Interacts with SLC35G1 and STIM1. Interacts with TMEM203. Interacts with TMEM64 and PDIA3. Interacts with TMX1. Interacts with TMX2. Interacts with VMP1; VMP1 competes with PLN and SLN to prevent them from forming an inhibitory complex with ATP2A2. Interacts with ULK1. Interacts with S100A1 in a Ca(2+)-dependent manner. Interacts with TUNAR. Interacts with FLVCR2; this interaction occurs in the absence of heme and promotes ATP2A2 proteasomal degradation; this complex is dissociated upon heme binding. Interacts with FNIP1. As to quaternary structure, interacts with TRAM2 (via C-terminus). The cofactor is Mg(2+). In terms of processing, nitrated under oxidative stress. Nitration on the two tyrosine residues inhibits catalytic activity. Serotonylated on Gln residues by TGM2 in response to hypoxia, leading to its inactivation. In terms of tissue distribution, detected in heart left ventricle (at protein level). Isoform 2 is highly expressed in heart and slow twitch skeletal muscle. Isoform 1 is widely expressed.

It is found in the endoplasmic reticulum membrane. The protein localises to the sarcoplasmic reticulum membrane. It carries out the reaction Ca(2+)(in) + ATP + H2O = Ca(2+)(out) + ADP + phosphate + H(+). With respect to regulation, has different conformational states with differential Ca2+ affinity. The E1 conformational state (active form) shows high Ca(2+) affinity, while the E2 state exhibits low Ca(2+) affinity. Binding of ATP allosterically increases its affinity for subsequent binding of Ca2+. Reversibly inhibited by phospholamban (PLN) at low calcium concentrations. PLN inhibits ATP2A2 Ca(2+) affinity by disrupting its allosteric activation by ATP. Inhibited by sarcolipin (SLN) and myoregulin (MRLN). The inhibition is blocked by VMP1. Enhanced by STRIT1/DWORF; STRIT1 increases activity by displacing sarcolipin (SLN), phospholamban (PLN) and myoregulin (MRLN). Stabilizes SERCA2 in its E2 state. This magnesium-dependent enzyme catalyzes the hydrolysis of ATP coupled with the translocation of calcium from the cytosol to the sarcoplasmic reticulum lumen. Involved in autophagy in response to starvation. Upon interaction with VMP1 and activation, controls ER-isolation membrane contacts for autophagosome formation. Also modulates ER contacts with lipid droplets, mitochondria and endosomes. In coordination with FLVCR2 mediates heme-stimulated switching from mitochondrial ATP synthesis to thermogenesis. Functionally, involved in the regulation of the contraction/relaxation cycle. Acts as a regulator of TNFSF11-mediated Ca(2+) signaling pathways via its interaction with TMEM64 which is critical for the TNFSF11-induced CREB1 activation and mitochondrial ROS generation necessary for proper osteoclast generation. Association between TMEM64 and SERCA2 in the ER leads to cytosolic Ca(2+) spiking for activation of NFATC1 and production of mitochondrial ROS, thereby triggering Ca(2+) signaling cascades that promote osteoclast differentiation and activation. The sequence is that of Sarcoplasmic/endoplasmic reticulum calcium ATPase 2 (ATP2A2) from Sus scrofa (Pig).